Here is a 395-residue protein sequence, read N- to C-terminus: Elongation factor Tu (395 aa).

A tr-type G domain is found at 10-204; the sequence is KPHVNIGTIG…AVDEYIPTPQ (195 aa). The segment at 19–26 is G1; that stretch reads GHVDHGKT. Residue 19-26 coordinates GTP; it reads GHVDHGKT. Residue Thr-26 participates in Mg(2+) binding. The segment at 60-64 is G2; that stretch reads GITIS. The segment at 81–84 is G3; that stretch reads DCPG. Residues 81–85 and 136–139 contribute to the GTP site; these read DCPGH and NKCD. Residues 136-139 form a G4 region; the sequence is NKCD. The segment at 174–176 is G5; that stretch reads SAL.

This sequence belongs to the TRAFAC class translation factor GTPase superfamily. Classic translation factor GTPase family. EF-Tu/EF-1A subfamily. As to quaternary structure, monomer.

The protein resides in the cytoplasm. It carries out the reaction GTP + H2O = GDP + phosphate + H(+). Functionally, GTP hydrolase that promotes the GTP-dependent binding of aminoacyl-tRNA to the A-site of ribosomes during protein biosynthesis. This chain is Elongation factor Tu, found in Anoxybacillus flavithermus (strain DSM 21510 / WK1).